Reading from the N-terminus, the 210-residue chain is Uracil phosphoribosyltransferase (210 aa).

5-phospho-alpha-D-ribose 1-diphosphate is bound by residues Arg-80, Arg-105, and 132 to 140 (DPMLATGGS). Uracil contacts are provided by residues Ile-195 and 200–202 (GDA). Asp-201 provides a ligand contact to 5-phospho-alpha-D-ribose 1-diphosphate.

The protein belongs to the UPRTase family. Requires Mg(2+) as cofactor.

It catalyses the reaction UMP + diphosphate = 5-phospho-alpha-D-ribose 1-diphosphate + uracil. It functions in the pathway pyrimidine metabolism; UMP biosynthesis via salvage pathway; UMP from uracil: step 1/1. Allosterically activated by GTP. Its function is as follows. Catalyzes the conversion of uracil and 5-phospho-alpha-D-ribose 1-diphosphate (PRPP) to UMP and diphosphate. The chain is Uracil phosphoribosyltransferase from Deinococcus radiodurans (strain ATCC 13939 / DSM 20539 / JCM 16871 / CCUG 27074 / LMG 4051 / NBRC 15346 / NCIMB 9279 / VKM B-1422 / R1).